The following is a 299-amino-acid chain: ATP phosphoribosyltransferase (299 aa).

It belongs to the ATP phosphoribosyltransferase family. Long subfamily. It depends on Mg(2+) as a cofactor.

It localises to the cytoplasm. It catalyses the reaction 1-(5-phospho-beta-D-ribosyl)-ATP + diphosphate = 5-phospho-alpha-D-ribose 1-diphosphate + ATP. It functions in the pathway amino-acid biosynthesis; L-histidine biosynthesis; L-histidine from 5-phospho-alpha-D-ribose 1-diphosphate: step 1/9. With respect to regulation, feedback inhibited by histidine. Functionally, catalyzes the condensation of ATP and 5-phosphoribose 1-diphosphate to form N'-(5'-phosphoribosyl)-ATP (PR-ATP). Has a crucial role in the pathway because the rate of histidine biosynthesis seems to be controlled primarily by regulation of HisG enzymatic activity. This chain is ATP phosphoribosyltransferase, found in Shewanella halifaxensis (strain HAW-EB4).